The following is a 108-amino-acid chain: Large ribosomal subunit protein P1 (108 aa).

The disordered stretch occupies residues 67-108 (PAAAPAEAGGEEKKEEEKKEEEEKEEEVSEEEALAGLSALFG). Acidic residues predominate over residues 84-99 (KKEEEEKEEEVSEEEA).

This sequence belongs to the eukaryotic ribosomal protein P1/P2 family. Part of the 50S ribosomal subunit. Homodimer, it forms part of the ribosomal stalk which helps the ribosome interact with GTP-bound translation factors. Forms a heptameric uL10/P0(P1)2(P1)2(P1)2 complex, where uL10/P0 forms an elongated spine to which the P1 dimers bind in a sequential fashion.

Forms part of the ribosomal stalk, playing a central role in the interaction of the ribosome with GTP-bound translation factors. The stalk complex of P.horikoshii binds to E.coli large subunits and confers on them the ability to interact with eukaryotic elongation factors. Each succesive P1 dimer bound along the P0 spine increases the GTPase activity of elongation factors and increases translation by reconsituted ribosomes. This Pyrococcus horikoshii (strain ATCC 700860 / DSM 12428 / JCM 9974 / NBRC 100139 / OT-3) protein is Large ribosomal subunit protein P1.